Here is a 185-residue protein sequence, read N- to C-terminus: Ribosome-recycling factor (185 aa).

This sequence belongs to the RRF family.

It localises to the cytoplasm. Its function is as follows. Responsible for the release of ribosomes from messenger RNA at the termination of protein biosynthesis. May increase the efficiency of translation by recycling ribosomes from one round of translation to another. The sequence is that of Ribosome-recycling factor from Shewanella woodyi (strain ATCC 51908 / MS32).